The following is a 112-amino-acid chain: Cell cycle protein GpsB (112 aa).

Residues 32–75 (LDDIIKDYETYISTIEELRQENTRLKEEVKQAKKRQEAAQTTVS) are a coiled coil.

Belongs to the GpsB family. Forms polymers through the coiled coil domains. Interacts with PBP1, MreC and EzrA.

The protein resides in the cytoplasm. Its function is as follows. Divisome component that associates with the complex late in its assembly, after the Z-ring is formed, and is dependent on DivIC and PBP2B for its recruitment to the divisome. Together with EzrA, is a key component of the system that regulates PBP1 localization during cell cycle progression. Its main role could be the removal of PBP1 from the cell pole after pole maturation is completed. Also contributes to the recruitment of PBP1 to the division complex. Not essential for septum formation. The chain is Cell cycle protein GpsB from Streptococcus mutans serotype c (strain ATCC 700610 / UA159).